The primary structure comprises 237 residues: Putative N-acetylmuramoyl-L-alanine amidase (237 aa).

Residues 7-225 (ILIDAGHGGY…IANSIYLGLK (219 aa)) form the MurNAc-LAA domain.

This sequence belongs to the N-acetylmuramoyl-L-alanine amidase 3 family.

Its subcellular location is the secreted. The catalysed reaction is Hydrolyzes the link between N-acetylmuramoyl residues and L-amino acid residues in certain cell-wall glycopeptides.. Cell-wall hydrolase involved in septum cleavage during cell division. The sequence is that of Putative N-acetylmuramoyl-L-alanine amidase (amiB) from Buchnera aphidicola subsp. Acyrthosiphon pisum (strain APS) (Acyrthosiphon pisum symbiotic bacterium).